We begin with the raw amino-acid sequence, 356 residues long: Carbohydrate sulfotransferase 10 (356 aa).

Residues 1 to 6 (MHHQWL) lie on the Cytoplasmic side of the membrane. A helical; Signal-anchor for type II membrane protein transmembrane segment spans residues 7 to 27 (LLAACFWVIFMFMVASKFITL). The Lumenal segment spans residues 28 to 356 (TFKDPDGYSA…GYQKPDFLLN (329 aa)). The N-linked (GlcNAc...) asparagine glycan is linked to asparagine 99. 3'-phosphoadenylyl sulfate is bound by residues 127–133 (PKVGNTQ) and 189–197 (RDPFERLIS). N-linked (GlcNAc...) asparagine glycans are attached at residues asparagine 228 and asparagine 316.

Belongs to the sulfotransferase 2 family. As to expression, in myogenic progenitors, it is ubiquitously expressed.

Its subcellular location is the golgi apparatus membrane. The enzyme catalyses 3-O-{beta-D-GlcA-(1-&gt;[3)-alpha-D-Xyl-(1-&gt;3)-beta-D-GlcA-(1-&gt;](n)-4)-beta-D-Xyl-(1-&gt;4)-Rib-ol-P-Rib-ol-P-3-beta-D-GalNAc-(1-&gt;3)-beta-D-GlcNAc-(1-&gt;4)-O-6-P-alpha-D-Man}-L-Thr-[protein] + 3'-phosphoadenylyl sulfate = 3-O-{O-3-S-beta-D-GlcA-(1-&gt;[3)-alpha-D-Xyl-(1-&gt;3)-beta-D-GlcA-(1-&gt;](n)-4)-beta-D-Xyl-(1-&gt;4)-Rib-ol-P-Rib-ol-P-3-beta-D-GalNAc-(1-&gt;3)-beta-D-GlcNAc-(1-&gt;4)-O-6-P-alpha-D-Man}-L-Thr-[protein] + adenosine 3',5'-bisphosphate + H(+). It carries out the reaction 17beta-estradiol 3-O-(beta-D-glucuronate) + 3'-phosphoadenylyl sulfate = 17beta-estradiol 3-O-(3-sulfo-beta-D-glucuronate) + adenosine 3',5'-bisphosphate + H(+). It catalyses the reaction 17beta-estradiol 3-O-(beta-D-glucuronate) 17-sulfate + 3'-phosphoadenylyl sulfate = 17beta-estradiol 3-O-(3-sulfo-beta-D-glucuronate) 17-sulfate + adenosine 3',5'-bisphosphate + H(+). The catalysed reaction is 17beta-estradiol 17-O-(beta-D-glucuronate) + 3'-phosphoadenylyl sulfate = 17beta-estradiol 17-O-(3-sulfo-beta-D-glucuronate) + adenosine 3',5'-bisphosphate + H(+). The enzyme catalyses 16alpha,17beta-estriol 3-O-(beta-D-glucuronate) + 3'-phosphoadenylyl sulfate = 16alpha,17beta-estriol 3-O-(3-sulfo-beta-D-glucuronate) + adenosine 3',5'-bisphosphate + H(+). It carries out the reaction 16alpha,17beta-estriol 16-O-(beta-D-glucuronate) + 3'-phosphoadenylyl sulfate = 16alpha,17beta-estriol 16-O-(3-sulfo-beta-D-glucuronate) + adenosine 3',5'-bisphosphate + H(+). It catalyses the reaction 16alpha,17beta-estriol 17-O-(beta-D-glucuronate) + 3'-phosphoadenylyl sulfate = 16alpha,17beta-estriol 17-O-(3-sulfo-beta-D-glucuronate) + adenosine 3',5'-bisphosphate + H(+). The catalysed reaction is estrone 3-O-(beta-D-glucuronate) + 3'-phosphoadenylyl sulfate = estrone 3-O-(3-sulfo-beta-D-glucuronate) + adenosine 3',5'-bisphosphate + H(+). The enzyme catalyses 3alpha,20alpha-dihydroxy-5beta-pregnane 3-O-(beta-D-glucuronate) + 3'-phosphoadenylyl sulfate = 3alpha,20alpha-dihydroxy-5beta-pregnane 3-O-(3-sulfo-beta-D-glucuronate) + adenosine 3',5'-bisphosphate + H(+). It carries out the reaction testosterone 17-O-(beta-D-glucuronate) + 3'-phosphoadenylyl sulfate = testosterone 17-O-(3-sulfo-beta-D-glucuronate) + adenosine 3',5'-bisphosphate + H(+). It catalyses the reaction 3beta-androst-5-en-17-one 3-O-(beta-D-glucuronate) + 3'-phosphoadenylyl sulfate = 3beta-androst-5-en-17-one 3-O-(3-sulfo-beta-D-glucuronate) + adenosine 3',5'-bisphosphate + H(+). The catalysed reaction is 3alpha,17alpha-dihydroxy-5beta-androstane-11-one-17beta-carboxylate 3-O-(beta-D-glucuronate) + 3'-phosphoadenylyl sulfate = 3alpha,17alpha-dihydroxy-5beta-androstane-11-one-17beta-carboxylate 3-O-(3-sulfo-beta-D-glucuronate) + adenosine 3',5'-bisphosphate + H(+). The enzyme catalyses 3alpha-hydroxyetiocholan-17-one 3-O-(beta-D-glucuronate) + 3'-phosphoadenylyl sulfate = 3alpha-hydroxyetiocholan-17-one 3-O-(3-sulfo-beta-D-glucuronate) + adenosine 3',5'-bisphosphate + H(+). It participates in steroid metabolism. Its pathway is protein modification; carbohydrate sulfation. Functionally, catalyzes the transfer of sulfate from 3'-phosphoadenylyl sulfate (PAPS) to position 3 of terminal glucuronic acid of both protein- and lipid-linked oligosaccharides. Participates in biosynthesis of HNK-1 carbohydrate structure 3-O-sulfo-beta-D-GlcA-(1-&gt;3)-beta-D-Gal-(1-&gt;4)-D-GlcNAc-R, a sulfated glucuronyl-lactosaminyl residue carried by many neural recognition molecules, which is involved in cell interactions during ontogenetic development and in synaptic plasticity in the adult. May be indirectly involved in synapse plasticity of the hippocampus, via its role in HNK-1 biosynthesis. Sulfates terminal glucuronyl residue of the laminin globular (LG)-domain binding epitope on DAG1/alpha-dystroglycan and prevents further polymerization by LARGE1 glycosyltransferase. Likely defines the chain length of LG epitope, conferring binding specificity to extracellular matrix components. Plays a role in down-regulating the steroid hormones. Sulfates glucuronidated estrogens and androgens with an impact in hormone cycle and fertility. Has a preference for glucuronyl moiety at the 3-hydroxyl group of a sterol ring rather than the 17-hydroxyl group, showing high catalytic efficiency for 17beta-estradiol 3-O-(beta-D-glucuronate) and dehydroepiandrosterone 3-O-(beta-D-glucuronate) hormones. This chain is Carbohydrate sulfotransferase 10 (Chst10), found in Rattus norvegicus (Rat).